We begin with the raw amino-acid sequence, 48 residues long: Cytochrome b559 subunit beta (48 aa).

The helical transmembrane segment at 23 to 39 (WLAVHALAIPSVFFLGS) threads the bilayer. Position 27 (H27) interacts with heme.

It belongs to the PsbE/PsbF family. Heterodimer of an alpha subunit and a beta subunit. PSII is composed of 1 copy each of membrane proteins PsbA, PsbB, PsbC, PsbD, PsbE, PsbF, PsbH, PsbI, PsbJ, PsbK, PsbL, PsbM, PsbT, PsbX, PsbY, Psb30/Ycf12, peripheral proteins PsbO, CyanoQ (PsbQ), PsbU, PsbV and a large number of cofactors. It forms dimeric complexes. It depends on heme b as a cofactor.

It is found in the cellular thylakoid membrane. This b-type cytochrome is tightly associated with the reaction center of photosystem II (PSII). PSII is a light-driven water:plastoquinone oxidoreductase that uses light energy to abstract electrons from H(2)O, generating O(2) and a proton gradient subsequently used for ATP formation. It consists of a core antenna complex that captures photons, and an electron transfer chain that converts photonic excitation into a charge separation. This chain is Cytochrome b559 subunit beta, found in Prochlorococcus marinus (strain MIT 9301).